Consider the following 315-residue polypeptide: Leucine-rich repeat-containing protein 75B (315 aa).

Residues 1–23 (MGARLGRRAGPEAGSEAGAAAGC) are disordered. The segment covering 11–23 (PEAGSEAGAAAGC) has biased composition (low complexity). LRR repeat units lie at residues 182–195 (LAVL…LSDE) and 207–220 (LPRL…GNRL). Residues 284 to 315 (PEGSAAGATTPASTWDSTAAGLGPEPQACCAR) form a disordered region. Low complexity predominate over residues 286–297 (GSAAGATTPAST).

Belongs to the LRRC75 family.

May suppress myogenic differentiation by modulating MYOG expression and Erk1/2 signaling. This Homo sapiens (Human) protein is Leucine-rich repeat-containing protein 75B.